The following is a 360-amino-acid chain: Photosystem II protein D1 (360 aa).

3 consecutive transmembrane segments (helical) span residues 29–46 (YIGWFGVLMFPLLLTATT), 118–133 (HFLLGVACYMGREWEL), and 142–156 (WIAVAYSAPVAAATA). Histidine 118 lines the chlorophyll a pocket. Tyrosine 126 provides a ligand contact to pheophytin a. [CaMn4O5] cluster is bound by residues aspartate 170 and glutamate 189. The helical transmembrane segment at 197–218 (FHMMGVAGVFGGSLFSAMHGSL) threads the bilayer. Residue histidine 198 participates in chlorophyll a binding. A quinone contacts are provided by residues histidine 215 and 264-265 (SF). Position 215 (histidine 215) interacts with Fe cation. Fe cation is bound at residue histidine 272. The chain crosses the membrane as a helical span at residues 274-288 (FLALWPVVGIWFTAL). The [CaMn4O5] cluster site is built by histidine 332, glutamate 333, aspartate 342, and alanine 344. The propeptide occupies 345–360 (SGEVMPVALTAPSINA).

The protein belongs to the reaction center PufL/M/PsbA/D family. In terms of assembly, PSII is composed of 1 copy each of membrane proteins PsbA, PsbB, PsbC, PsbD, PsbE, PsbF, PsbH, PsbI, PsbJ, PsbK, PsbL, PsbM, PsbT, PsbX, PsbY, PsbZ, Psb30/Ycf12, at least 3 peripheral proteins of the oxygen-evolving complex and a large number of cofactors. It forms dimeric complexes. The cofactor is The D1/D2 heterodimer binds P680, chlorophylls that are the primary electron donor of PSII, and subsequent electron acceptors. It shares a non-heme iron and each subunit binds pheophytin, quinone, additional chlorophylls, carotenoids and lipids. D1 provides most of the ligands for the Mn4-Ca-O5 cluster of the oxygen-evolving complex (OEC). There is also a Cl(-1) ion associated with D1 and D2, which is required for oxygen evolution. The PSII complex binds additional chlorophylls, carotenoids and specific lipids.. Post-translationally, tyr-161 forms a radical intermediate that is referred to as redox-active TyrZ, YZ or Y-Z. In terms of processing, C-terminally processed by CTPA; processing is essential to allow assembly of the oxygen-evolving complex and thus photosynthetic growth.

It is found in the plastid. The protein resides in the cyanelle thylakoid membrane. The catalysed reaction is 2 a plastoquinone + 4 hnu + 2 H2O = 2 a plastoquinol + O2. Photosystem II (PSII) is a light-driven water:plastoquinone oxidoreductase that uses light energy to abstract electrons from H(2)O, generating O(2) and a proton gradient subsequently used for ATP formation. It consists of a core antenna complex that captures photons, and an electron transfer chain that converts photonic excitation into a charge separation. The D1/D2 (PsbA/PsbD) reaction center heterodimer binds P680, the primary electron donor of PSII as well as several subsequent electron acceptors. This is Photosystem II protein D1 from Cyanophora paradoxa.